The following is a 741-amino-acid chain: Protein lin-54 homolog (741 aa).

Positions Pro-513–Glu-626 constitute a CRC domain. The segment at Lys-515–Tyr-528 is DNA-binding. Positions 517, 519, 524, 529, 531, 538, 541, 543, and 546 each coordinate Zn(2+). The interval Ile-575–Ser-588 is linker. 9 residues coordinate Zn(2+): Cys-591, Cys-593, Cys-598, Cys-603, Cys-605, Cys-612, Cys-616, Cys-618, and Cys-621. The DNA-binding stretch occupies residues Cys-591–Glu-604.

Belongs to the lin-54 family. In terms of assembly, component of the DREAM complex.

Its subcellular location is the nucleus. In terms of biological role, component of the DREAM complex, a multiprotein complex that can both act as a transcription activator or repressor depending on the context. Specifically recognizes the consensus motif 5'-TTYRAA-3' in target DNA. This is Protein lin-54 homolog (lin54) from Xenopus tropicalis (Western clawed frog).